The chain runs to 217 residues: Biogenesis of lysosome-related organelles complex 1 subunit 4 (217 aa).

Residues 1 to 57 (MEGSFSDGGALPEGLAEEAEPQGAAWSGDSGTVSQSHSSASGPWEDEGAEDGAPGRD) are disordered. Residues 29–41 (DSGTVSQSHSSAS) show a composition bias toward polar residues. A coiled-coil region spans residues 136–165 (DRLEAFVRMVGGRVARMEEQVTKAEAELGT). A Phosphothreonine modification is found at Thr-165.

It belongs to the BLOC1S4 family. As to quaternary structure, interacts with BLOC1S5 and BLOC1S6. Component of the biogenesis of lysosome-related organelles complex 1 (BLOC-1) composed of BLOC1S1, BLOC1S2, BLOC1S3, BLOC1S4, BLOC1S5, BLOC1S6, DTNBP1/BLOC1S7 and SNAPIN/BLOC1S8. Octamer composed of one copy each BLOC1S1, BLOC1S2, BLOC1S3, BLOC1S4, BLOC1S5, BLOC1S6, DTNBP1/BLOC1S7 and SNAPIN/BLOC1S8. The BLOC-1 complex associates with the AP-3 protein complex and membrane protein cargos.

It is found in the cytoplasm. In terms of biological role, component of the BLOC-1 complex, a complex that is required for normal biogenesis of lysosome-related organelles (LRO), such as platelet dense granules and melanosomes. In concert with the AP-3 complex, the BLOC-1 complex is required to target membrane protein cargos into vesicles assembled at cell bodies for delivery into neurites and nerve terminals. The BLOC-1 complex, in association with SNARE proteins, is also proposed to be involved in neurite extension. Plays a role in intracellular vesicle trafficking. The protein is Biogenesis of lysosome-related organelles complex 1 subunit 4 (BLOC1S4) of Homo sapiens (Human).